Here is a 207-residue protein sequence, read N- to C-terminus: Dephospho-CoA kinase (207 aa).

One can recognise a DPCK domain in the interval 12-207 (LIGITGMIGG…LYSTLLGKML (196 aa)). 20-25 (GGGKST) provides a ligand contact to ATP.

Belongs to the CoaE family.

The protein resides in the cytoplasm. The catalysed reaction is 3'-dephospho-CoA + ATP = ADP + CoA + H(+). The protein operates within cofactor biosynthesis; coenzyme A biosynthesis; CoA from (R)-pantothenate: step 5/5. Its function is as follows. Catalyzes the phosphorylation of the 3'-hydroxyl group of dephosphocoenzyme A to form coenzyme A. The chain is Dephospho-CoA kinase from Leptospira interrogans serogroup Icterohaemorrhagiae serovar copenhageni (strain Fiocruz L1-130).